The sequence spans 266 residues: MLDKVKNVIVVLSGKGGVGKSTVSTQLALALRATGHKVGLLDIDLCGPSVPYLLGLEGSDIYQCEDGWVPIYTDESKTLAVMSIGFLLKNRNDPVIWRGPKKTMMIRQFLTDVKWEDMDYLIIDTPPGTSDEHITVMECMREVPCNGAIIVTTPQGVALDDVRKEITFCKKTGIKLLGIVENMSGFVCPHCTECTNIFSSNGGAELARLAQVPHLGTLPIDPRVGVLSGSTASVLNELPDSSTAQIMRNIVQHLDALTAVPTPAQV.

14–21 lines the ATP pocket; the sequence is GKGGVGKS. The [4Fe-4S] cluster site is built by Cys188 and Cys191.

It belongs to the Mrp/NBP35 ATP-binding proteins family. Nubp2/CFD1 subfamily. Heterotetramer of 2 Nubp1 and 2 Nubp2 chains. [4Fe-4S] cluster is required as a cofactor.

The protein localises to the cytoplasm. Functionally, component of the cytosolic iron-sulfur (Fe/S) protein assembly (CIA) machinery. Required for maturation of extramitochondrial Fe-S proteins. The Nubp1-Nubp2 heterotetramer forms a Fe-S scaffold complex, mediating the de novo assembly of an Fe-S cluster and its transfer to target apoproteins. This chain is Cytosolic Fe-S cluster assembly factor Nubp2 homolog, found in Drosophila virilis (Fruit fly).